The chain runs to 1017 residues: Anaphase-promoting complex subunit 5 (1017 aa).

TPR repeat units follow at residues Lys30 to Leu63, Asp182 to Asp214, Val252 to Gln286, Pro337 to Arg370, and Asn508 to Ile541. Residues Ile451–Asn525 are compositionally biased toward low complexity. 2 disordered regions span residues Ile451–Gly527 and Asn617–Asn636. TPR repeat units lie at residues Leu642–Gln675, Val756–Phe790, Ala838–Asp871, Ser876–Leu908, and Lys931–Ser964.

Belongs to the APC5 family. In terms of assembly, the APC/C is composed of at least 13 subunits that stay tightly associated throughout the cell cycle: anapc1, anapc2, anapc3, anapc4, anapc5, anapc6, anapc7, anapc8, anapc10, anapc11, cdc20, cdc26 and cdh1.

The protein resides in the nucleus. It functions in the pathway protein modification; protein ubiquitination. Its function is as follows. Component of the anaphase promoting complex/cyclosome (APC/C), a cell cycle-regulated E3 ubiquitin-protein ligase complex that controls progression through mitosis and the G1 phase of the cell cycle. The protein is Anaphase-promoting complex subunit 5 (anapc5) of Dictyostelium discoideum (Social amoeba).